A 1415-amino-acid chain; its full sequence is MVELGFPAYGPAIEKRVRPLYKALCDWRAAVTLAARRRFQQLRCNANMDDDGQPMFPPLPVPDWNNPSTDWRPSPPRSGPKKDFCGDLPAPLTSGPRLTTPSSGRMSELPHTTSSPRSSPRPRGPETSPSNEHIIISPPRNPPSNTTHRNVGHVSRSPSSSSSSSSSSSPSSSSLIVLSSPSSSRSPSPSPPRPRADSSSRPRRGRGSNRGGRSGPQSKGRKASPRTRKLEDEDYLPQETANRRGGGRPRGRPPKSGRAVQRNDIQVTSSSGLADTSPYDLCGSVWWEVPLPPPGRCWFGGLGGHRQALTDSPEIVEAIHRFNTSHGPVPVYVEEMKDYAKQYDALVNSLFHKSMKVNPLNWMHHGKLSPADAALNHIYVQKFQSSYDSPGAAVTGTVNRCIPHIAGAMKERKLLWAFPHIAASIAMTRRYCKDQKTFLFRSLKKAYASMAFPDNSSETEKGISSKPSTSPSVLITTSTQTTASPHAPKIDVTAIHGRVYQSVVDLSRCLADGSLDDPEFSFAGCTRPDCCVEEFDAARPLEELADACVLACDSVVAALLCGPDGPHRVAKMLSFYDSRITPHVPDSQQWEKCRILLVSWYNELSDLRAAVYGAYGNTPTSQHLDERALAARVVSLIAETIGPLVRQDPDRAWVRMGSRDITSLLLRDWRGTNDGDPGLVKAKHLRRTAELLNDGRSSKGTYGVFAPPRRPDQLFRGPGRPRRSTSSSQSASDKSPIKSTHRHTSDPIPISTPRPERDPAGTPHENTMSGPVQPAANGHSCSSTPTPAKKGNKTSSDTISLKDPTKTRIKASAKAQTDETLPETSTAHPSAMDQSSSLERKTLYTGPAVSSKERRRSAQSSTPSDIGGVSRKRKSAPEQYKQGLQTPLPMPEPSVGQTLLDPTTTTHDILSSSLPNRSCSSSPSPSKRPYHPSCYSPTDIMTGALVGPRGRQDRAAFRQFPVGTVIGQTPPQSVLNAYCPNGAFVELVEFARIPEPWQEVLRYSPEAMADIARVANALPGKYNSNEIITSAASEAFHTATSKLRARTAWMRYQQESPDDVSIVVLYSPLPGEHLFCVPAPDTPPGGLKFDNKRGGLSFLLAAFSNRLCLPKSSAWAGRWKAAPDISPLTRMGVLFLSTEDLGYQGAVEYLQRQCMKRKKKLIIMDTVEDRYRLPNGPCIIEEATRYMKCIISPRSQCCVRWPGLRDFGTTIITSRDVVGPLTLMDLEQYYYCEIGIEDSTINLCCTGNVRYTVETRLEDVSCVPTTPLFYFAAVKHVRPDFLCGETYSNRAARKWGLCAPLRPIYVIESKMNAIVSPSFLHPTARNLCRSVILPPDPEARPVVVHIPEGTCSALAEDMVASIRSSCITWGQHEEGGPETTAQENSDIRAMKVRPPTKPPYMSPLNIGNRDTTFTD.

4 disordered regions span residues 48–272, 454–480, 691–935, and 1371–1415; these read MDDD…SSSG, DNSS…TSTQ, LLND…PSCY, and QHEE…TFTD. Residues 96-105 are compositionally biased toward polar residues; sequence PRLTTPSSGR. The span at 125-187 shows a compositional bias: low complexity; sequence PETSPSNEHI…LSSPSSSRSP (63 aa). Basic residues predominate over residues 245–255; the sequence is GGGRPRGRPPK. Polar residues-rich tracts occupy residues 263–272 and 465–480; these read NDIQVTSSSG and SKPS…TSTQ. Over residues 724–738 the composition is skewed to low complexity; the sequence is STSSSQSASDKSPIK. Polar residues-rich tracts occupy residues 814-837 and 895-910; these read KAQT…QSSS and VGQT…HDIL. The segment covering 911 to 933 has biased composition (low complexity); the sequence is SSSLPNRSCSSSPSPSKRPYHPS.

The protein belongs to the herpesviridae ICP4 family. A long stretch of serine residues may be a major site of phosphorylation.

The protein resides in the host nucleus. Functionally, this IE protein is a multifunctional protein capable of migrating to the nucleus, binding to DNA, trans-activating other viral genes, and autoregulating its own synthesis. It is required for the switch from immediate-early to early mode of gene expression. The protein is Major viral transcription factor ICP4 homolog (ICP4) of Gallus gallus (Chicken).